The following is a 223-amino-acid chain: Enolase-phosphatase E1 (223 aa).

This sequence belongs to the HAD-like hydrolase superfamily. MasA/MtnC family. As to quaternary structure, monomer. The cofactor is Mg(2+).

The catalysed reaction is 5-methylsulfanyl-2,3-dioxopentyl phosphate + H2O = 1,2-dihydroxy-5-(methylsulfanyl)pent-1-en-3-one + phosphate. The protein operates within amino-acid biosynthesis; L-methionine biosynthesis via salvage pathway; L-methionine from S-methyl-5-thio-alpha-D-ribose 1-phosphate: step 3/6. It participates in amino-acid biosynthesis; L-methionine biosynthesis via salvage pathway; L-methionine from S-methyl-5-thio-alpha-D-ribose 1-phosphate: step 4/6. In terms of biological role, bifunctional enzyme that catalyzes the enolization of 2,3-diketo-5-methylthiopentyl-1-phosphate (DK-MTP-1-P) into the intermediate 2-hydroxy-3-keto-5-methylthiopentenyl-1-phosphate (HK-MTPenyl-1-P), which is then dephosphorylated to form the acireductone 1,2-dihydroxy-3-keto-5-methylthiopentene (DHK-MTPene). This Aquifex aeolicus (strain VF5) protein is Enolase-phosphatase E1.